We begin with the raw amino-acid sequence, 106 residues long: Cell division protein FtsB (106 aa).

Residues 1-3 (MRL) are Cytoplasmic-facing. A helical transmembrane segment spans residues 4 to 21 (LTLIFVALIALLQYPLWL). Over 22–106 (GKGSWLRVWD…SPPAALTGAQ (85 aa)) the chain is Periplasmic. The stretch at 31–73 (DLNQKIVAQKAVNAELKLRNDTLDAEVRDLKQGNAAIEERARS) forms a coiled coil.

It belongs to the FtsB family. Part of a complex composed of FtsB, FtsL and FtsQ.

Its subcellular location is the cell inner membrane. In terms of biological role, essential cell division protein. May link together the upstream cell division proteins, which are predominantly cytoplasmic, with the downstream cell division proteins, which are predominantly periplasmic. This is Cell division protein FtsB from Methylobacillus flagellatus (strain ATCC 51484 / DSM 6875 / VKM B-1610 / KT).